We begin with the raw amino-acid sequence, 276 residues long: Inositol-1-monophosphatase ImpA (276 aa).

Positions 74, 90, 92, and 93 each coordinate Mg(2+). Glutamate 74 lines the substrate pocket. Residues 92 to 95 (IDGT), arginine 192, and aspartate 221 each bind substrate. Aspartate 221 lines the Mg(2+) pocket.

The protein belongs to the inositol monophosphatase superfamily. Mg(2+) serves as cofactor.

It carries out the reaction a myo-inositol phosphate + H2O = myo-inositol + phosphate. Its pathway is polyol metabolism; myo-inositol biosynthesis; myo-inositol from D-glucose 6-phosphate: step 2/2. Its function is as follows. Catalyzes the dephosphorylation of inositol 1-phosphate (I-1-P) to yield free myo-inositol, a key metabolite in mycobacteria. The protein is Inositol-1-monophosphatase ImpA (impA) of Mycolicibacterium smegmatis (strain ATCC 700084 / mc(2)155) (Mycobacterium smegmatis).